A 374-amino-acid chain; its full sequence is Transaldolase (374 aa).

The active-site Schiff-base intermediate with substrate is Lys140.

Belongs to the transaldolase family. Type 2 subfamily.

The protein resides in the cytoplasm. It catalyses the reaction D-sedoheptulose 7-phosphate + D-glyceraldehyde 3-phosphate = D-erythrose 4-phosphate + beta-D-fructose 6-phosphate. The protein operates within carbohydrate degradation; pentose phosphate pathway; D-glyceraldehyde 3-phosphate and beta-D-fructose 6-phosphate from D-ribose 5-phosphate and D-xylulose 5-phosphate (non-oxidative stage): step 2/3. Functionally, transaldolase is important for the balance of metabolites in the pentose-phosphate pathway. The polypeptide is Transaldolase (Renibacterium salmoninarum (strain ATCC 33209 / DSM 20767 / JCM 11484 / NBRC 15589 / NCIMB 2235)).